A 616-amino-acid chain; its full sequence is ATP-dependent zinc metalloprotease FtsH (616 aa).

Residues M1 to A8 lie on the Cytoplasmic side of the membrane. Residues T9–L29 traverse the membrane as a helical segment. Topologically, residues S30 to W114 are extracellular. The helical transmembrane segment at W115–F135 threads the bilayer. The Cytoplasmic portion of the chain corresponds to M136–V616. G208–T215 is a binding site for ATP. H430 is a binding site for Zn(2+). E431 is an active-site residue. Zn(2+) contacts are provided by H434 and D506.

The protein in the central section; belongs to the AAA ATPase family. It in the C-terminal section; belongs to the peptidase M41 family. In terms of assembly, homohexamer. Requires Zn(2+) as cofactor.

It is found in the cell membrane. Acts as a processive, ATP-dependent zinc metallopeptidase for both cytoplasmic and membrane proteins. Plays a role in the quality control of integral membrane proteins. This is ATP-dependent zinc metalloprotease FtsH from Caldicellulosiruptor bescii (strain ATCC BAA-1888 / DSM 6725 / KCTC 15123 / Z-1320) (Anaerocellum thermophilum).